The sequence spans 445 residues: Lateral flagellar hook-associated protein 2 (445 aa).

The stretch at 388 to 423 (SGAFKSRKEALQANLDRLSDKQTTLERKYDMSYKRY) forms a coiled coil.

The protein belongs to the FliD family. In terms of assembly, homopentamer.

It localises to the secreted. Its subcellular location is the bacterial flagellum. In terms of biological role, required for the morphogenesis and for the elongation of the flagellar filament by facilitating polymerization of the flagellin monomers at the tip of growing filament. Forms a capping structure, which prevents flagellin subunits (transported through the central channel of the flagellum) from leaking out without polymerization at the distal end. Essential for swarming motility. The polypeptide is Lateral flagellar hook-associated protein 2 (fliDL) (Vibrio parahaemolyticus serotype O3:K6 (strain RIMD 2210633)).